Consider the following 397-residue polypeptide: MLFNYLRKPNPTNLLTSPDSFRYFEYGMFCMGWHTPATHKIIYYITSCLIFAWCAVYLPIGIIISFKTDINTFTPNELLTVMQLFFNSVGMPFKVLFFNLYISGFYKAKKLLSEMDKRCTTLKERVEVHQGVVRCNKAYLIYQFIYTAYTISTFLSAALSGKLPWRIYNPFVDFRESRSSFWKAALNETALMLFAVTQTLMSDIYPLLYGLILRVHLKLLRLRVESLCTDSGKSDAENEQDLIKCIKDHNLIIDYAAAIRPAVTRTIFVQFLLIGICLGLSMINLLFFADIWTGLATVAYINGLMVQTFPFCFVCDLLKKDCELLVSAIFHSNWINSSRSYKSSLRYFLKNAQKSIAFTAGSIFPISTGSNIKVAKLAFSVVTFVNQLNIADRLTKN.

At methionine 1–tyrosine 43 the chain is on the cytoplasmic side. The helical transmembrane segment at tyrosine 44–isoleucine 64 threads the bilayer. Residues serine 65 to glutamate 77 are Extracellular-facing. A helical membrane pass occupies residues leucine 78–phenylalanine 98. Residues asparagine 99–alanine 138 lie on the Cytoplasmic side of the membrane. A helical transmembrane segment spans residues tyrosine 139–leucine 159. At serine 160–methionine 192 the chain is on the extracellular side. N-linked (GlcNAc...) asparagine glycosylation occurs at asparagine 187. A helical transmembrane segment spans residues leucine 193–leucine 213. At arginine 214–threonine 266 the chain is on the cytoplasmic side. The chain crosses the membrane as a helical span at residues isoleucine 267–phenylalanine 287. The Extracellular segment spans residues phenylalanine 288–threonine 293. A helical transmembrane segment spans residues glycine 294 to valine 314. The Cytoplasmic portion of the chain corresponds to cysteine 315 to lysine 354. The chain crosses the membrane as a helical span at residues serine 355–alanine 375. The Extracellular portion of the chain corresponds to lysine 376–asparagine 397.

The protein belongs to the insect chemoreceptor superfamily. Heteromeric odorant receptor channel (TC 1.A.69) family. Or2a subfamily. As to quaternary structure, interacts with Orco. Complexes exist early in the endomembrane system in olfactory sensory neurons (OSNs), coupling these complexes to the conserved ciliary trafficking pathway. As to expression, expressed in olfactory sensory neurons in the antenna.

The protein resides in the cell membrane. Its function is as follows. Odorant receptor which mediates acceptance or avoidance behavior, depending on its substrates. The odorant receptor repertoire encodes a large collection of odor stimuli that vary widely in identity, intensity, and duration. May form a complex with Orco to form odorant-sensing units, providing sensitive and prolonged odorant signaling and calcium permeability. The protein is Odorant receptor 98a (Or98a) of Drosophila melanogaster (Fruit fly).